The following is a 275-amino-acid chain: Glutamate racemase (275 aa).

Substrate-binding positions include 12 to 13 (DS) and 44 to 45 (YG). Residue cysteine 75 is the Proton donor/acceptor of the active site. 76 to 77 (NT) is a substrate binding site. Cysteine 185 (proton donor/acceptor) is an active-site residue. 186–187 (TH) serves as a coordination point for substrate.

This sequence belongs to the aspartate/glutamate racemases family.

The enzyme catalyses L-glutamate = D-glutamate. It participates in cell wall biogenesis; peptidoglycan biosynthesis. In terms of biological role, provides the (R)-glutamate required for cell wall biosynthesis. This chain is Glutamate racemase, found in Mycolicibacterium paratuberculosis (strain ATCC BAA-968 / K-10) (Mycobacterium paratuberculosis).